A 203-amino-acid polypeptide reads, in one-letter code: N-(5'-phosphoribosyl)anthranilate isomerase (203 aa).

It belongs to the TrpF family.

It carries out the reaction N-(5-phospho-beta-D-ribosyl)anthranilate = 1-(2-carboxyphenylamino)-1-deoxy-D-ribulose 5-phosphate. The protein operates within amino-acid biosynthesis; L-tryptophan biosynthesis; L-tryptophan from chorismate: step 3/5. The sequence is that of N-(5'-phosphoribosyl)anthranilate isomerase from Geotalea uraniireducens (strain Rf4) (Geobacter uraniireducens).